We begin with the raw amino-acid sequence, 128 residues long: uncharacterized protein (128 aa).

This is an uncharacterized protein from Mycoplasma genitalium (strain ATCC 33530 / DSM 19775 / NCTC 10195 / G37) (Mycoplasmoides genitalium).